Here is a 384-residue protein sequence, read N- to C-terminus: Prostaglandin E synthase 2 (384 aa).

Over 1–56 the chain is Lumenal; that stretch reads MAQAARLSWVLVSSRCALTEGLLTRPWQPLSAQSRAGFTRVAAGSRGAAVRKGSPR. The chain crosses the membrane as a helical span at residues 57–73; sequence LLGAAALALGGALGLYH. Over 74–384 the chain is Cytoplasmic; the sequence is TVRWHQRSQD…VHHVNPSCKD (311 aa). In terms of domain architecture, Glutaredoxin spans 89 to 192; that stretch reads SAAQLPLSNS…EVITYYPPMK (104 aa). Glutathione-binding positions include Val-147 and 163 to 164; that span reads DS. Residues 262–376 enclose the GST C-terminal domain; that stretch reads YIVREGKFGA…RAIEEAPSVH (115 aa).

This sequence belongs to the GST superfamily. As to quaternary structure, homodimer. Interacts with EXOSC10. May interact with CEBPB. Post-translationally, synthesized as a Golgi membrane-associated protein, and the proteolytic removal of the N-terminal hydrophobic domain leads to the formation of a mature cytosolic enzyme. In terms of tissue distribution, widely expressed. Expressed in brain, heart, liver, colon and lung.

It localises to the golgi apparatus membrane. The protein localises to the nucleus. The protein resides in the cytoplasm. The enzyme catalyses prostaglandin H2 = prostaglandin E2. The catalysed reaction is prostaglandin H2 = (12S)-hydroxy-(5Z,8E,10E)-heptadecatrienoate + malonaldehyde. It participates in lipid metabolism; prostaglandin biosynthesis. Its activity is regulated as follows. Isomerase activity is increased by sulfhydril compounds. Dithiothreitol (DTT) is most effective, followed by glutathione (GSH) and 2-mercaptoethanol. Functionally, isomerase that catalyzes the conversion of PGH2 into the more stable prostaglandin E2 (PGE2) (in vitro). The biological function and the GSH-dependent property of PTGES2 is still under debate. In vivo, PTGES2 could form a complex with GSH and heme and would not participate in PGE2 synthesis but would catalyze the degradation of prostaglandin E2 H2 (PGH2) to 12(S)-hydroxy-5(Z),8(E),10(E)-heptadecatrienoic acid (HHT) and malondialdehyde (MDA). May also have transactivation activity toward IFN-gamma (IFNG), possibly via an interaction with CEBPB; however, the relevance of transcription activation activity remains unclear. The polypeptide is Prostaglandin E synthase 2 (Ptges2) (Mus musculus (Mouse)).